A 434-amino-acid chain; its full sequence is Serine hydroxymethyltransferase (434 aa).

Residues L133 and 137–139 (GHL) each bind (6S)-5,6,7,8-tetrahydrofolate. K242 bears the N6-(pyridoxal phosphate)lysine mark.

The protein belongs to the SHMT family. As to quaternary structure, homodimer. It depends on pyridoxal 5'-phosphate as a cofactor.

The protein localises to the cytoplasm. It carries out the reaction (6R)-5,10-methylene-5,6,7,8-tetrahydrofolate + glycine + H2O = (6S)-5,6,7,8-tetrahydrofolate + L-serine. It functions in the pathway one-carbon metabolism; tetrahydrofolate interconversion. The protein operates within amino-acid biosynthesis; glycine biosynthesis; glycine from L-serine: step 1/1. Its function is as follows. Catalyzes the reversible interconversion of serine and glycine with tetrahydrofolate (THF) serving as the one-carbon carrier. This reaction serves as the major source of one-carbon groups required for the biosynthesis of purines, thymidylate, methionine, and other important biomolecules. Also exhibits THF-independent aldolase activity toward beta-hydroxyamino acids, producing glycine and aldehydes, via a retro-aldol mechanism. This chain is Serine hydroxymethyltransferase, found in Methylobacterium radiotolerans (strain ATCC 27329 / DSM 1819 / JCM 2831 / NBRC 15690 / NCIMB 10815 / 0-1).